A 755-amino-acid polypeptide reads, in one-letter code: Photosystem I P700 chlorophyll a apoprotein A1 (755 aa).

8 consecutive transmembrane segments (helical) span residues 72–95 (IFSA…YHGA), 158–181 (LLCT…FHYH), 197–221 (LNHH…HVAI), 297–315 (QAHH…GHMY), 352–375 (WHAQ…QHMY), 391–417 (ISLF…IYMV), 439–461 (AIIS…FYVH), and 536–554 (FMVH…LILL). Positions 578 and 587 each coordinate [4Fe-4S] cluster. Transmembrane regions (helical) follow at residues 594–615 (HVFL…HFSW) and 669–691 (LSAY…MFLF). Residue histidine 680 coordinates chlorophyll a'. The chlorophyll a site is built by methionine 688 and tyrosine 696. Residue tryptophan 697 participates in phylloquinone binding. A helical membrane pass occupies residues 729–749 (AVGVAHYLLGGIVTTWAFFLA).

The protein belongs to the PsaA/PsaB family. The PsaA/B heterodimer binds the P700 chlorophyll special pair and subsequent electron acceptors. PSI consists of a core antenna complex that captures photons, and an electron transfer chain that converts photonic excitation into a charge separation. The cyanobacterial PSI reaction center is composed of one copy each of PsaA,B,C,D,E,F,I,J,K,L,M and X, and forms trimeric complexes. The cofactor is PSI electron transfer chain: 5 chlorophyll a, 1 chlorophyll a', 2 phylloquinones and 3 4Fe-4S clusters. PSI core antenna: 90 chlorophyll a, 22 carotenoids, 3 phospholipids and 1 galactolipid. P700 is a chlorophyll a/chlorophyll a' dimer, A0 is one or more chlorophyll a, A1 is one or both phylloquinones and FX is a shared 4Fe-4S iron-sulfur center..

The protein resides in the cellular thylakoid membrane. The enzyme catalyses reduced [plastocyanin] + hnu + oxidized [2Fe-2S]-[ferredoxin] = oxidized [plastocyanin] + reduced [2Fe-2S]-[ferredoxin]. In terms of biological role, psaA and PsaB bind P700, the primary electron donor of photosystem I (PSI), as well as the electron acceptors A0, A1 and FX. PSI is a plastocyanin/cytochrome c6-ferredoxin oxidoreductase, converting photonic excitation into a charge separation, which transfers an electron from the donor P700 chlorophyll pair to the spectroscopically characterized acceptors A0, A1, FX, FA and FB in turn. Oxidized P700 is reduced on the lumenal side of the thylakoid membrane by plastocyanin or cytochrome c6. The chain is Photosystem I P700 chlorophyll a apoprotein A1 from Synechococcus sp. (strain JA-3-3Ab) (Cyanobacteria bacterium Yellowstone A-Prime).